The following is a 384-amino-acid chain: S-adenosylmethionine synthase (384 aa).

His-15 serves as a coordination point for ATP. Asp-17 contacts Mg(2+). Glu-43 contributes to the K(+) binding site. Residues Glu-56 and Gln-99 each coordinate L-methionine. The interval 99–109 (QSPDINQGVDR) is flexible loop. ATP contacts are provided by residues 164 to 166 (DAK), 230 to 231 (RF), Asp-239, 245 to 246 (RK), Ala-262, and Lys-266. Residue Asp-239 coordinates L-methionine. L-methionine is bound at residue Lys-270.

This sequence belongs to the AdoMet synthase family. Homotetramer; dimer of dimers. The cofactor is Mg(2+). K(+) is required as a cofactor.

The protein localises to the cytoplasm. The catalysed reaction is L-methionine + ATP + H2O = S-adenosyl-L-methionine + phosphate + diphosphate. Its pathway is amino-acid biosynthesis; S-adenosyl-L-methionine biosynthesis; S-adenosyl-L-methionine from L-methionine: step 1/1. Functionally, catalyzes the formation of S-adenosylmethionine (AdoMet) from methionine and ATP. The overall synthetic reaction is composed of two sequential steps, AdoMet formation and the subsequent tripolyphosphate hydrolysis which occurs prior to release of AdoMet from the enzyme. The sequence is that of S-adenosylmethionine synthase from Salmonella heidelberg (strain SL476).